The sequence spans 212 residues: Ras-like protein (212 aa).

15-22 (GGGGVGKS) is a GTP binding site. Positions 37–45 (YDPTIEDSY) match the Effector region motif. Residues 62–66 (DTAGQ) and 121–124 (NKCD) contribute to the GTP site. Residues Cys205 and Cys206 are each lipidated (S-palmitoyl cysteine). Position 209 is a cysteine methyl ester (Cys209). A lipid anchor (S-geranylgeranyl cysteine) is attached at Cys209. A propeptide spans 210-212 (IVM) (removed in mature form).

Belongs to the small GTPase superfamily. Ras family.

Its subcellular location is the cell membrane. It carries out the reaction GTP + H2O = GDP + phosphate + H(+). Its activity is regulated as follows. Alternates between an inactive form bound to GDP and an active form bound to GTP. Activated by a guanine nucleotide-exchange factor (GEF) and inactivated by a GTPase-activating protein (GAP). This is Ras-like protein (rasA) from Emericella nidulans (strain FGSC A4 / ATCC 38163 / CBS 112.46 / NRRL 194 / M139) (Aspergillus nidulans).